The sequence spans 117 residues: Iron-sulfur cluster insertion protein ErpA (117 aa).

3 residues coordinate iron-sulfur cluster: C45, C109, and C111.

This sequence belongs to the HesB/IscA family. As to quaternary structure, homodimer. Iron-sulfur cluster serves as cofactor.

Its function is as follows. Required for insertion of 4Fe-4S clusters for at least IspG. The protein is Iron-sulfur cluster insertion protein ErpA of Chromohalobacter salexigens (strain ATCC BAA-138 / DSM 3043 / CIP 106854 / NCIMB 13768 / 1H11).